The chain runs to 282 residues: uncharacterized protein (282 aa).

A run of 6 helical transmembrane segments spans residues 18-38, 40-60, 87-107, 119-139, 164-184, and 260-280; these read PIVLLIPVPGSSVIHDLWAGT, LLVVFGISVLLTFYPGWVTIG, LWIVLAIGFLTAALAGGTPVV, ALHFLRITALSVVLLALGAMV, IPVDEWAVALALALRAFPMLI, and VTLAITAMASGTAVAIESLIL.

The protein belongs to the CbiQ family.

The protein localises to the cell membrane. This is an uncharacterized protein from Mycobacterium tuberculosis (strain CDC 1551 / Oshkosh).